Reading from the N-terminus, the 431-residue chain is Glutamate-1-semialdehyde 2,1-aminomutase 2 (431 aa).

Lys268 is subject to N6-(pyridoxal phosphate)lysine.

This sequence belongs to the class-III pyridoxal-phosphate-dependent aminotransferase family. HemL subfamily. In terms of assembly, homodimer. Requires pyridoxal 5'-phosphate as cofactor.

It is found in the cytoplasm. It carries out the reaction (S)-4-amino-5-oxopentanoate = 5-aminolevulinate. Its pathway is porphyrin-containing compound metabolism; protoporphyrin-IX biosynthesis; 5-aminolevulinate from L-glutamyl-tRNA(Glu): step 2/2. In Bacillus licheniformis (strain ATCC 14580 / DSM 13 / JCM 2505 / CCUG 7422 / NBRC 12200 / NCIMB 9375 / NCTC 10341 / NRRL NRS-1264 / Gibson 46), this protein is Glutamate-1-semialdehyde 2,1-aminomutase 2.